The sequence spans 215 residues: MELTPHEARVIGVLLEKEITTPEQYPLSLNSLTSGCNQKTSREPVLSLSESEVQNTLDDLTKKRLISEQSGFGSRVVKYKHRFCNTEFSDLQLKSSELAVVCLLLLRGPQTPGELRTRSNRLHEFHDVSEVEATLNELQRRESPLVMLLAKEPGKREARYRQLFTEVDDTEIQSTPAQSTEYSITQHASGLEARVNTLEQQVAELTEQIKHLLDR.

It belongs to the UPF0502 family.

In Shewanella halifaxensis (strain HAW-EB4), this protein is UPF0502 protein Shal_1801.